A 443-amino-acid polypeptide reads, in one-letter code: Probable D-serine dehydratase (443 aa).

K118 carries the N6-(pyridoxal phosphate)lysine modification.

The protein belongs to the serine/threonine dehydratase family. DsdA subfamily. Requires pyridoxal 5'-phosphate as cofactor.

The catalysed reaction is D-serine = pyruvate + NH4(+). This is Probable D-serine dehydratase from Colwellia psychrerythraea (strain 34H / ATCC BAA-681) (Vibrio psychroerythus).